A 440-amino-acid chain; its full sequence is MSTSGPAAPGDVPALPPPPPGPGSGPAPPAPAATARDTMDGRAELPIFPRAGVPPLAASDTVPAVPEGAGAARPAAPPRPTSFSVLDILDPNKFNSRRRRCVLLGPVVPATCAPCAPAACVAVPAASGRSPRAELERRALSAATGVAAAAGAEPTSAGDSYRADEAEANGYSSGSGRSPTADSEDEAPEDEDEEEAPEVQDAQGTEEPRGGSGGLGARGSGCPGAAEVEASPVDDTAAPGPRGNSPGAPGPPATATGAGSAGSTPQGAAVTTKPKRKRTGSDSKSGKPRRARTAFTYEQLVALENKFKATRYLSVCERLNLALSLSLTETQVKIWFQNRRTKWKKQNPGADTSAPTGGGGGPGPGAGPGAGLPGGLSPLSPSPPMGAPLALHGPAGYPAHSPGGLVCAAQLPFLSSPAVLSPFVLGSQTYGAPAFYAPHL.

Residues 1 to 13 (MSTSGPAAPGDVP) show a composition bias toward low complexity. 3 disordered regions span residues 1 to 82 (MSTS…RPTS), 145 to 291 (GVAA…PRRA), and 342 to 387 (KWKK…PMGA). The span at 14–31 (ALPPPPPGPGSGPAPPAP) shows a compositional bias: pro residues. 2 stretches are compositionally biased toward low complexity: residues 62–74 (VPAV…AARP) and 145–158 (GVAA…TSAG). Positions 170-181 (GYSSGSGRSPTA) are enriched in polar residues. Acidic residues predominate over residues 182 to 198 (DSEDEAPEDEDEEEAPE). The span at 210–222 (GGSGGLGARGSGC) shows a compositional bias: gly residues. The segment covering 237–269 (AAPGPRGNSPGAPGPPATATGAGSAGSTPQGAA) has biased composition (low complexity). The homeobox DNA-binding region spans 288–347 (PRRARTAFTYEQLVALENKFKATRYLSVCERLNLALSLSLTETQVKIWFQNRRTKWKKQN). Gly residues predominate over residues 356–374 (TGGGGGPGPGAGPGAGLPG).

This sequence belongs to the NK-1 homeobox family.

The protein resides in the nucleus. Its function is as follows. May be required for the coordinated crosstalk of factors involved in the maintenance of energy homeostasis, possibly by regulating the transcription of specific factors involved in energy balance. This chain is NK1 transcription factor-related protein 1, found in Mus musculus (Mouse).